Reading from the N-terminus, the 223-residue chain is Endonuclease NucS (223 aa).

This sequence belongs to the NucS endonuclease family.

Its subcellular location is the cytoplasm. Functionally, cleaves both 3' and 5' ssDNA extremities of branched DNA structures. The sequence is that of Endonuclease NucS from Mycobacterium sp. (strain JLS).